A 480-amino-acid chain; its full sequence is Zinc finger protein ztf-6 (480 aa).

Disordered stretches follow at residues 92–160, 174–198, 282–307, and 328–351; these read CHDS…TMMV, GTNG…EEHD, LDAG…PTAS, and DANT…MKVP. Low complexity-rich tracts occupy residues 95 to 105, 131 to 145, 174 to 187, and 286 to 296; these read SATSTTTTVSH, SSIE…SSSV, GTNG…TSSS, and SSENDGSTSSS. 2 C2H2-type zinc fingers span residues 359 to 383 and 388 to 410; these read YICP…FVTH and FNCD…QKIH. Residues 416-441 form a C2H2-type 3; degenerate zinc finger; sequence YQCRGCGTNYTTQNGLRLHRQRNPAC. The disordered stretch occupies residues 461–480; the sequence is ALSGPLSKNSSPTKQMVSAP.

In terms of biological role, probable transcription factor, involved in regulation of dopamine neuron lineage specification. May play a role in maintaining robustness of the Wnt/beta-catenin asymmetry pathway. This chain is Zinc finger protein ztf-6, found in Caenorhabditis elegans.